The chain runs to 158 residues: Large ribosomal subunit protein uL30 (158 aa).

This sequence belongs to the universal ribosomal protein uL30 family. In terms of assembly, part of the 50S ribosomal subunit.

This chain is Large ribosomal subunit protein uL30, found in Sulfurisphaera tokodaii (strain DSM 16993 / JCM 10545 / NBRC 100140 / 7) (Sulfolobus tokodaii).